Reading from the N-terminus, the 273-residue chain is MAVVKCKPTSPGRRHVVKVVNPELHKGKPYAPLLEKNSKSGGRNNNGRITTRHIGGGHKQQYRLIDFKRNKDGIPAVVERLEYDPNRSANIALVLYKDGERRYILAPKGLKAGDQIQSGVDAAIKAGNTLPMRNIPVGSTVHNVEMKPGKGGQLARSAGTYVQIVARDGSYVTLRLRSGEMRKVESDCRATLGEVGNAEHMLRVLGKAGAARWRGVRPTVRGTAMNPVDHPHGGGEGRNFGKHPVSPWGLQTKGKKTRSNKRTDKFIVRRRTK.

2 disordered regions span residues 28 to 54 (KPYA…TRHI) and 221 to 273 (RGTA…RRTK). The segment covering 39 to 48 (KSGGRNNNGR) has biased composition (low complexity).

The protein belongs to the universal ribosomal protein uL2 family. In terms of assembly, part of the 50S ribosomal subunit. Forms a bridge to the 30S subunit in the 70S ribosome.

Functionally, one of the primary rRNA binding proteins. Required for association of the 30S and 50S subunits to form the 70S ribosome, for tRNA binding and peptide bond formation. It has been suggested to have peptidyltransferase activity; this is somewhat controversial. Makes several contacts with the 16S rRNA in the 70S ribosome. The sequence is that of Large ribosomal subunit protein uL2 from Pectobacterium carotovorum subsp. carotovorum (strain PC1).